The sequence spans 129 residues: Large ribosomal subunit protein uL22 (129 aa).

This sequence belongs to the universal ribosomal protein uL22 family. In terms of assembly, part of the 50S ribosomal subunit.

In terms of biological role, this protein binds specifically to 23S rRNA; its binding is stimulated by other ribosomal proteins, e.g. L4, L17, and L20. It is important during the early stages of 50S assembly. It makes multiple contacts with different domains of the 23S rRNA in the assembled 50S subunit and ribosome. Its function is as follows. The globular domain of the protein is located near the polypeptide exit tunnel on the outside of the subunit, while an extended beta-hairpin is found that lines the wall of the exit tunnel in the center of the 70S ribosome. The sequence is that of Large ribosomal subunit protein uL22 from Bartonella henselae (strain ATCC 49882 / DSM 28221 / CCUG 30454 / Houston 1) (Rochalimaea henselae).